The primary structure comprises 339 residues: Putative methylthioribose-1-phosphate isomerase (339 aa).

Substrate-binding positions include 43-45, Arg86, and Gln191; that span reads RGA. The active-site Proton donor is Asp232. 241-242 lines the substrate pocket; the sequence is NK.

It belongs to the eIF-2B alpha/beta/delta subunits family. MtnA subfamily.

It catalyses the reaction 5-(methylsulfanyl)-alpha-D-ribose 1-phosphate = 5-(methylsulfanyl)-D-ribulose 1-phosphate. Catalyzes the interconversion of methylthioribose-1-phosphate (MTR-1-P) into methylthioribulose-1-phosphate (MTRu-1-P). The polypeptide is Putative methylthioribose-1-phosphate isomerase (Archaeoglobus fulgidus (strain ATCC 49558 / DSM 4304 / JCM 9628 / NBRC 100126 / VC-16)).